The primary structure comprises 313 residues: tRNA dimethylallyltransferase (313 aa).

17–24 (GPTASGKT) contributes to the ATP binding site. 19–24 (TASGKT) lines the substrate pocket. Interaction with substrate tRNA regions lie at residues 42 to 45 (DSAL), 166 to 170 (QRLSR), and 247 to 252 (RCVGYR).

This sequence belongs to the IPP transferase family. Monomer. It depends on Mg(2+) as a cofactor.

It catalyses the reaction adenosine(37) in tRNA + dimethylallyl diphosphate = N(6)-dimethylallyladenosine(37) in tRNA + diphosphate. Functionally, catalyzes the transfer of a dimethylallyl group onto the adenine at position 37 in tRNAs that read codons beginning with uridine, leading to the formation of N6-(dimethylallyl)adenosine (i(6)A). The sequence is that of tRNA dimethylallyltransferase from Yersinia pseudotuberculosis serotype O:1b (strain IP 31758).